Here is a 397-residue protein sequence, read N- to C-terminus: MKTRKSHPIKRFFEQETAGGILLIVAAALAMLLANSPFYGHYDLLIDTPFIISLGDFALEKPLLLWTNDGLMAVFFLLVGLELKRELLEGELSDPRKIALPAVGAIGGMLVPALIYWWINKDNPLALSGWAIPAATDIAFALGVLALLGSRVPVTVKIFLTSIAVFDDIGAILIIAFFYTSKISMLALVVAAICCAILFICNRSGVTTLRAYLLIGLVMWVALLKSGVHATLGGVILAFFIPMTAARPHPEIKIPSPLKFLEHELHAPVAFLILPIFAFANSGIRFIGMGVEDFTHSVPVGIASGLFFGKQLGVFLFCGVCVLFGWLKLPKGMRWVHLYGVAVLCGIGFTMSLFIGSLAFQESGINSVIDERLGIVFGSLVSAVLGFVVLRSAKQKA.

11 helical membrane-spanning segments follow: residues 18 to 38, 63 to 83, 98 to 118, 129 to 149, 158 to 178, 181 to 201, 207 to 224, 269 to 289, 306 to 326, 340 to 360, and 373 to 393; these read AGGI…NSPF, LLLW…GLEL, IALP…IYWW, GWAI…ALLG, IFLT…IAFF, SKIS…LFIC, TTLR…VALL, VAFL…FIGM, LFFG…LFGW, GVAV…SLAF, and LGIV…LRSA.

The protein belongs to the NhaA Na(+)/H(+) (TC 2.A.33) antiporter family.

The protein localises to the cell inner membrane. The catalysed reaction is Na(+)(in) + 2 H(+)(out) = Na(+)(out) + 2 H(+)(in). Its function is as follows. Na(+)/H(+) antiporter that extrudes sodium in exchange for external protons. This is Na(+)/H(+) antiporter NhaA 3 from Saccharophagus degradans (strain 2-40 / ATCC 43961 / DSM 17024).